The following is a 132-amino-acid chain: Small ribosomal subunit protein uS8c (132 aa).

Belongs to the universal ribosomal protein uS8 family. In terms of assembly, part of the 30S ribosomal subunit.

It localises to the plastid. The protein resides in the chloroplast. In terms of biological role, one of the primary rRNA binding proteins, it binds directly to 16S rRNA central domain where it helps coordinate assembly of the platform of the 30S subunit. This is Small ribosomal subunit protein uS8c (rps8) from Huperzia lucidula (Shining clubmoss).